We begin with the raw amino-acid sequence, 158 residues long: SsrA-binding protein (158 aa).

Positions 133–158 (KIHDKRETEAKRDWNRQKQRLLKDNA) are disordered. A compositionally biased stretch (basic and acidic residues) spans 136–158 (DKRETEAKRDWNRQKQRLLKDNA).

This sequence belongs to the SmpB family.

It localises to the cytoplasm. In terms of biological role, required for rescue of stalled ribosomes mediated by trans-translation. Binds to transfer-messenger RNA (tmRNA), required for stable association of tmRNA with ribosomes. tmRNA and SmpB together mimic tRNA shape, replacing the anticodon stem-loop with SmpB. tmRNA is encoded by the ssrA gene; the 2 termini fold to resemble tRNA(Ala) and it encodes a 'tag peptide', a short internal open reading frame. During trans-translation Ala-aminoacylated tmRNA acts like a tRNA, entering the A-site of stalled ribosomes, displacing the stalled mRNA. The ribosome then switches to translate the ORF on the tmRNA; the nascent peptide is terminated with the 'tag peptide' encoded by the tmRNA and targeted for degradation. The ribosome is freed to recommence translation, which seems to be the essential function of trans-translation. In Ruegeria pomeroyi (strain ATCC 700808 / DSM 15171 / DSS-3) (Silicibacter pomeroyi), this protein is SsrA-binding protein.